The chain runs to 167 residues: Translation initiation factor IF-3 (167 aa).

It belongs to the IF-3 family. Monomer.

It is found in the cytoplasm. In terms of biological role, IF-3 binds to the 30S ribosomal subunit and shifts the equilibrium between 70S ribosomes and their 50S and 30S subunits in favor of the free subunits, thus enhancing the availability of 30S subunits on which protein synthesis initiation begins. The chain is Translation initiation factor IF-3 from Shouchella clausii (strain KSM-K16) (Alkalihalobacillus clausii).